Reading from the N-terminus, the 56-residue chain is Keratin-associated protein 20-1 (56 aa).

It belongs to the KRTAP type 20 family. In terms of assembly, interacts with hair keratins.

Functionally, in the hair cortex, hair keratin intermediate filaments are embedded in an interfilamentous matrix, consisting of hair keratin-associated proteins (KRTAP), which are essential for the formation of a rigid and resistant hair shaft through their extensive disulfide bond cross-linking with abundant cysteine residues of hair keratins. The matrix proteins include the high-sulfur and high-glycine-tyrosine keratins. The polypeptide is Keratin-associated protein 20-1 (KRTAP20-1) (Homo sapiens (Human)).